The primary structure comprises 396 residues: 1-deoxy-D-xylulose 5-phosphate reductoisomerase (396 aa).

T10, G11, S12, I13, N38, and N123 together coordinate NADPH. K124 is a binding site for 1-deoxy-D-xylulose 5-phosphate. An NADPH-binding site is contributed by E125. D149 contacts Mn(2+). 1-deoxy-D-xylulose 5-phosphate is bound by residues S150, E151, S185, and H208. A Mn(2+)-binding site is contributed by E151. Residue G214 participates in NADPH binding. Residues S221, N226, K227, and E230 each contribute to the 1-deoxy-D-xylulose 5-phosphate site. E230 is a binding site for Mn(2+).

The protein belongs to the DXR family. Mg(2+) serves as cofactor. It depends on Mn(2+) as a cofactor.

It carries out the reaction 2-C-methyl-D-erythritol 4-phosphate + NADP(+) = 1-deoxy-D-xylulose 5-phosphate + NADPH + H(+). Its pathway is isoprenoid biosynthesis; isopentenyl diphosphate biosynthesis via DXP pathway; isopentenyl diphosphate from 1-deoxy-D-xylulose 5-phosphate: step 1/6. Its function is as follows. Catalyzes the NADPH-dependent rearrangement and reduction of 1-deoxy-D-xylulose-5-phosphate (DXP) to 2-C-methyl-D-erythritol 4-phosphate (MEP). This Shewanella piezotolerans (strain WP3 / JCM 13877) protein is 1-deoxy-D-xylulose 5-phosphate reductoisomerase.